The following is a 434-amino-acid chain: Cytochrome P450 144 (434 aa).

Positions 124 and 128 each coordinate substrate. R132, R326, H383, and C385 together coordinate heme.

This sequence belongs to the cytochrome P450 family. As to quaternary structure, monomer. Requires heme as cofactor.

This is Cytochrome P450 144 (cyp144) from Mycobacterium tuberculosis (strain CDC 1551 / Oshkosh).